Here is a 257-residue protein sequence, read N- to C-terminus: Ribosomal RNA small subunit methyltransferase J (257 aa).

S-adenosyl-L-methionine is bound by residues 107-108 (RD), 123-124 (ER), and Asp177.

This sequence belongs to the methyltransferase superfamily. RsmJ family.

Its subcellular location is the cytoplasm. It catalyses the reaction guanosine(1516) in 16S rRNA + S-adenosyl-L-methionine = N(2)-methylguanosine(1516) in 16S rRNA + S-adenosyl-L-homocysteine + H(+). Its function is as follows. Specifically methylates the guanosine in position 1516 of 16S rRNA. This is Ribosomal RNA small subunit methyltransferase J from Haemophilus influenzae (strain ATCC 51907 / DSM 11121 / KW20 / Rd).